The chain runs to 295 residues: Fructose-bisphosphate aldolase class 1 (295 aa).

Glu176 functions as the Proton acceptor in the catalytic mechanism. The active-site Schiff-base intermediate with dihydroxyacetone-P is Lys213.

Belongs to the class I fructose-bisphosphate aldolase family.

It catalyses the reaction beta-D-fructose 1,6-bisphosphate = D-glyceraldehyde 3-phosphate + dihydroxyacetone phosphate. Its pathway is carbohydrate degradation; glycolysis; D-glyceraldehyde 3-phosphate and glycerone phosphate from D-glucose: step 4/4. This chain is Fructose-bisphosphate aldolase class 1, found in Clostridium acetobutylicum (strain ATCC 824 / DSM 792 / JCM 1419 / IAM 19013 / LMG 5710 / NBRC 13948 / NRRL B-527 / VKM B-1787 / 2291 / W).